A 55-amino-acid polypeptide reads, in one-letter code: Large ribosomal subunit protein bL33 (55 aa).

Belongs to the bacterial ribosomal protein bL33 family.

This is Large ribosomal subunit protein bL33 from Clavibacter sepedonicus (Clavibacter michiganensis subsp. sepedonicus).